A 93-amino-acid chain; its full sequence is Mitochondrial import inner membrane translocase subunit TIM10 (93 aa).

The interval 1-31 (MSFLGFGGGQPQLSSQQKIQAAEAELDLVTD) is interaction with transmembrane regions of transmembrane proteins in transit. A Twin CX3C motif motif is present at residues 40-65 (CYKKCINTSYSEGELNKNESSCLDRC). Disulfide bonds link Cys40-Cys65 and Cys44-Cys61. The required for heterohexamerization stretch occupies residues 73 to 93 (NVQVGENMQKMGQSFNAAGKF).

Belongs to the small Tim family. Heterohexamer; composed of 3 copies of TIM9 and 3 copies of TIM10, named soluble 70 kDa complex. Associates directly with the TIM12 component of the TIM22 complex, whose core is composed of TIM18, TIM22 and TIM54. Interacts with the transmembrane regions of multi-pass transmembrane proteins in transit.

It is found in the mitochondrion inner membrane. Its subcellular location is the mitochondrion intermembrane space. Mitochondrial intermembrane chaperone that participates in the import and insertion of multi-pass transmembrane proteins into the mitochondrial inner membrane. Also required for the transfer of beta-barrel precursors from the TOM complex to the sorting and assembly machinery (SAM complex) of the outer membrane. Acts as a chaperone-like protein that protects the hydrophobic precursors from aggregation and guide them through the mitochondrial intermembrane space. Compared to TIM9, it may function as a substrate sensor. This is Mitochondrial import inner membrane translocase subunit TIM10 (TIM10) from Saccharomyces cerevisiae (strain ATCC 204508 / S288c) (Baker's yeast).